A 392-amino-acid polypeptide reads, in one-letter code: MTEEFNESMINDIKEGDKVTGEVQQVEDKQVVVHINGGKFNGIIPISQLSTHHIENPSEVVKQGDEIEAYVTKIEVDEENDSGVYILSKRQLETEKSYEYLQEKLDNDEIIEAKVTEVVKGGLVVDVGQRGFVPASLISTDFIEDFSVFDGQTIRIKVEELDPENNRVILSRKAVEQAENDVKKASLLESLNAGDVIKGKVARLTNFGAFVDIGGVDGLVHVSELSHEHVDSPEDVVSVGQEVDVKVKSVEKDAERISLSIKDTLPTPFESIKGQFHEDDVIEGKVVRLANFGAFVEIAPGVQGLVHISEIAHEHIGTPGEKLEPGQQVNVKILGIDEENERISLSIKATLPKEDVVESDDATTQSYLSNDSIEDNPTLGDVFGDKFKDLKF.

4 consecutive S1 motif domains span residues 16 to 90, 108 to 173, 194 to 262, and 279 to 348; these read GDKV…LSKR, DEII…LSRK, GDVI…LSIK, and DDVI…LSIK.

The protein belongs to the bacterial ribosomal protein bS1 family.

Functionally, binds mRNA; thus facilitating recognition of the initiation point. It is needed to translate mRNA with a short Shine-Dalgarno (SD) purine-rich sequence. This Staphylococcus haemolyticus (strain JCSC1435) protein is Small ribosomal subunit protein bS1 (rpsA).